A 270-amino-acid chain; its full sequence is Putative postmeiotic segregation increased 2-like protein 11 (270 aa).

Belongs to the DNA mismatch repair MutL/HexB family.

This chain is Putative postmeiotic segregation increased 2-like protein 11 (PMS2P11), found in Homo sapiens (Human).